We begin with the raw amino-acid sequence, 192 residues long: Thymidine kinase (192 aa).

ATP-binding positions include 9–16 (STMNAGKS) and 87–90 (DEAQ). Catalysis depends on glutamate 88, which acts as the Proton acceptor. Zn(2+)-binding residues include cysteine 145, cysteine 147, cysteine 182, and histidine 185.

The protein belongs to the thymidine kinase family. In terms of assembly, homotetramer.

It is found in the cytoplasm. The catalysed reaction is thymidine + ATP = dTMP + ADP + H(+). The polypeptide is Thymidine kinase (Pasteurella multocida (strain Pm70)).